An 858-amino-acid polypeptide reads, in one-letter code: Low-density lipoprotein receptor-related protein 12 (858 aa).

Positions methionine 1–alanine 32 are cleaved as a signal peptide. The Extracellular portion of the chain corresponds to glutamate 33–arginine 492. Cystine bridges form between cysteine 47-cysteine 76, cysteine 103-cysteine 122, cysteine 166-cysteine 178, cysteine 173-cysteine 191, cysteine 185-cysteine 200, cysteine 215-cysteine 232, cysteine 222-cysteine 245, cysteine 239-cysteine 254, and cysteine 259-cysteine 285. The 113-residue stretch at cysteine 47–glycine 159 folds into the CUB 1 domain. N-linked (GlcNAc...) asparagine glycosylation occurs at asparagine 75. LDL-receptor class A domains lie at aspartate 165–alanine 201 and proline 214–aspartate 255. Residues cysteine 259–aspartate 372 enclose the CUB 2 domain. 2 N-linked (GlcNAc...) asparagine glycosylation sites follow: asparagine 284 and asparagine 366. 3 consecutive LDL-receptor class A domains span residues phenylalanine 374–threonine 411, methionine 412–phenylalanine 449, and phenylalanine 450–proline 486. Intrachain disulfides connect cysteine 375–cysteine 388, cysteine 382–cysteine 401, cysteine 395–cysteine 410, cysteine 413–cysteine 426, cysteine 420–cysteine 439, cysteine 433–cysteine 448, cysteine 451–cysteine 463, cysteine 458–cysteine 476, and cysteine 470–cysteine 485. N-linked (GlcNAc...) asparagine glycosylation occurs at asparagine 409. Asparagine 441 carries N-linked (GlcNAc...) asparagine glycosylation. A helical membrane pass occupies residues valine 493–glycine 513. At cysteine 514–cysteine 858 the chain is on the cytoplasmic side. Disordered stretches follow at residues alanine 619–alanine 721 and serine 746–glutamate 767. The segment covering serine 712–alanine 721 has biased composition (low complexity). Residues serine 746–proline 755 show a composition bias toward polar residues.

The protein belongs to the LDLR family. In terms of assembly, may interact with RACK1, ZFYVE9 and NMRK2.

The protein resides in the membrane. It localises to the coated pit. Probable receptor, which may be involved in the internalization of lipophilic molecules and/or signal transduction. May act as a tumor suppressor. The sequence is that of Low-density lipoprotein receptor-related protein 12 (Lrp12) from Mus musculus (Mouse).